A 1045-amino-acid chain; its full sequence is Translation initiation factor IF-2 (1045 aa).

Disordered stretches follow at residues 1–169 and 184–451; these read MSDE…AQAP and QAPA…RGGP. The span at 83 to 94 shows a compositional bias: gly residues; it reads SGGGGSSAGGLS. The span at 103-123 shows a compositional bias: basic and acidic residues; sequence RAIEAAREHQERQAAERRAAE. Over residues 124 to 151 the composition is skewed to low complexity; it reads ARAASEAAAARDAAAKSAAAAKAAAAPA. Residues 152 to 163 are compositionally biased toward pro residues; sequence PEAPAAPAPTPA. The span at 184 to 199 shows a compositional bias: low complexity; it reads QAPAAPVAAAPAAPRA. Basic and acidic residues-rich tracts occupy residues 227–237 and 302–323; these read EPSRDRRDDRS and RNDR…RPQG. The span at 338–348 shows a compositional bias: pro residues; the sequence is RPAPGARPGPG. A compositionally biased stretch (low complexity) spans 352–363; sequence GARPGVPASAPA. Composition is skewed to basic and acidic residues over residues 381–393 and 438–450; these read VGRK…DRRK and RARE…RRGG. Residues 540-710 form the tr-type G domain; it reads PRPPVVTVMG…LLLAEVMDLK (171 aa). The tract at residues 549–556 is G1; it reads GHVDHGKT. Residue 549-556 participates in GTP binding; the sequence is GHVDHGKT. The segment at 574-578 is G2; it reads GITQH. The tract at residues 596–599 is G3; sequence DTPG. GTP contacts are provided by residues 596–600 and 650–653; these read DTPGH and NKMD. The tract at residues 650–653 is G4; the sequence is NKMD. Residues 686–688 are G5; the sequence is SAK.

Belongs to the TRAFAC class translation factor GTPase superfamily. Classic translation factor GTPase family. IF-2 subfamily.

Its subcellular location is the cytoplasm. In terms of biological role, one of the essential components for the initiation of protein synthesis. Protects formylmethionyl-tRNA from spontaneous hydrolysis and promotes its binding to the 30S ribosomal subunits. Also involved in the hydrolysis of GTP during the formation of the 70S ribosomal complex. The polypeptide is Translation initiation factor IF-2 (Caulobacter sp. (strain K31)).